A 311-amino-acid chain; its full sequence is Heparan sulfate glucosamine 3-O-sulfotransferase 1 (311 aa).

A signal peptide spans 1–20 (MTLLLLGAVLLVAQPQLVPS). Asn-52 is a glycosylation site (N-linked (GlcNAc...) asparagine). 3'-phosphoadenylyl sulfate-binding positions include 68 to 72 (KGGTR), Arg-151, and Ser-159. N-linked (GlcNAc...) asparagine glycans are attached at residues Asn-196, Asn-246, and Asn-253. Tyr-259 is a binding site for 3'-phosphoadenylyl sulfate. Residues Cys-260 and Cys-269 are joined by a disulfide bond. 3'-phosphoadenylyl sulfate is bound at residue 274-278 (KGRAH).

The protein belongs to the sulfotransferase 1 family.

Its subcellular location is the golgi apparatus lumen. It carries out the reaction alpha-D-glucosaminyl-[heparan sulfate](n) + 3'-phosphoadenylyl sulfate = 3-sulfo-alpha-D-glucosaminyl-[heparan sulfate](n) + adenosine 3',5'-bisphosphate + H(+). Its function is as follows. Sulfotransferase that utilizes 3'-phospho-5'-adenylyl sulfate (PAPS) to catalyze the transfer of a sulfo group to position 3 of glucosamine residues in heparan. Catalyzes the rate limiting step in the biosynthesis of heparan sulfate (HSact). This modification is a crucial step in the biosynthesis of anticoagulant heparan sulfate as it completes the structure of the antithrombin pentasaccharide binding site. This chain is Heparan sulfate glucosamine 3-O-sulfotransferase 1 (Hs3st1), found in Rattus norvegicus (Rat).